We begin with the raw amino-acid sequence, 367 residues long: Lipoyl synthase 2, chloroplastic (367 aa).

7 residues coordinate [4Fe-4S] cluster: C84, C89, C95, C121, C125, C128, and S336. One can recognise a Radical SAM core domain in the interval 104-325 (GEGDGIATAT…KEYGESVGFR (222 aa)).

It belongs to the radical SAM superfamily. Lipoyl synthase family. [4Fe-4S] cluster is required as a cofactor.

The protein resides in the plastid. It is found in the chloroplast. The enzyme catalyses [[Fe-S] cluster scaffold protein carrying a second [4Fe-4S](2+) cluster] + N(6)-octanoyl-L-lysyl-[protein] + 2 oxidized [2Fe-2S]-[ferredoxin] + 2 S-adenosyl-L-methionine + 4 H(+) = [[Fe-S] cluster scaffold protein] + N(6)-[(R)-dihydrolipoyl]-L-lysyl-[protein] + 4 Fe(3+) + 2 hydrogen sulfide + 2 5'-deoxyadenosine + 2 L-methionine + 2 reduced [2Fe-2S]-[ferredoxin]. The protein operates within protein modification; protein lipoylation via endogenous pathway; protein N(6)-(lipoyl)lysine from octanoyl-[acyl-carrier-protein]: step 2/2. In terms of biological role, catalyzes the radical-mediated insertion of two sulfur atoms into the C-6 and C-8 positions of the octanoyl moiety bound to the lipoyl domains of lipoate-dependent enzymes, thereby converting the octanoylated domains into lipoylated derivatives. This chain is Lipoyl synthase 2, chloroplastic, found in Zea mays (Maize).